Here is a 179-residue protein sequence, read N- to C-terminus: GTP-dependent dephospho-CoA kinase (179 aa).

Positions 50, 51, 52, 69, 71, and 126 each coordinate GTP.

This sequence belongs to the GTP-dependent DPCK family.

It carries out the reaction 3'-dephospho-CoA + GTP = GDP + CoA + H(+). It functions in the pathway cofactor biosynthesis; coenzyme A biosynthesis. Its function is as follows. Catalyzes the GTP-dependent phosphorylation of the 3'-hydroxyl group of dephosphocoenzyme A to form coenzyme A (CoA). This is GTP-dependent dephospho-CoA kinase from Pyrococcus horikoshii (strain ATCC 700860 / DSM 12428 / JCM 9974 / NBRC 100139 / OT-3).